Here is a 148-residue protein sequence, read N- to C-terminus: Large ribosomal subunit protein bL9 (148 aa).

In terms of assembly, part of the 50S ribosomal subunit.

Binds to the 23S rRNA. Extends more that 50 Angstroms beyond the surface of the 70S ribosome. In Thermus thermophilus (strain ATCC 27634 / DSM 579 / HB8), this protein is Large ribosomal subunit protein bL9 (rplI).